The sequence spans 199 residues: Outer-membrane lipoprotein LolB (199 aa).

Residues M1 to G28 form the signal peptide. Residue C29 is the site of N-palmitoyl cysteine attachment. C29 carries the S-diacylglycerol cysteine lipid modification.

Belongs to the LolB family. In terms of assembly, monomer.

The protein localises to the cell outer membrane. Functionally, plays a critical role in the incorporation of lipoproteins in the outer membrane after they are released by the LolA protein. In Bordetella pertussis (strain Tohama I / ATCC BAA-589 / NCTC 13251), this protein is Outer-membrane lipoprotein LolB.